Here is a 782-residue protein sequence, read N- to C-terminus: Formin-like protein 9 (782 aa).

The first 24 residues, 1-24 (MQNFWFAIFFFLLTCAPPSPLSYA), serve as a signal peptide directing secretion. A helical transmembrane segment spans residues 102 to 122 (LLLPALSAVLVIATVIGLALF). 3 disordered regions span residues 191–223 (DSPE…EEEE), 264–287 (MSPP…RLRV), and 387–407 (SSSQ…PPLV). Over residues 214–223 (EVNEEDEEEE) the composition is skewed to acidic residues. Over residues 396 to 407 (ALPPPTRPPPLV) the composition is skewed to pro residues. The FH2 domain maps to 406–782 (LVPPSQPFVV…LDQVCKEMGD (377 aa)).

The protein belongs to the formin-like family. Class-I subfamily.

The protein localises to the membrane. Its function is as follows. Might be involved in the organization and polarity of the actin cytoskeleton. The chain is Formin-like protein 9 (FH9) from Arabidopsis thaliana (Mouse-ear cress).